The primary structure comprises 662 residues: p-hydroxybenzoic acid efflux pump subunit AaeB (662 aa).

Helical transmembrane passes span 22-42, 52-72, 76-96, 102-122, 129-149, 161-181, 378-398, 415-435, 439-459, 465-485, and 491-511; these read FAFK…HLQL, AAIV…SGAI, GMLR…IIIA, VVML…SSLV, IFGL…GTPL, EIVL…PRSI, LFWL…IAVV, FLFG…FIMP, QSML…GLEV, GSLG…PMTF, and LDSA…IMLI.

This sequence belongs to the aromatic acid exporter ArAE (TC 2.A.85) family.

The protein localises to the cell inner membrane. Functionally, forms an efflux pump with AaeA. Could function as a metabolic relief valve, allowing to eliminate certain compounds when they accumulate to high levels in the cell. This is p-hydroxybenzoic acid efflux pump subunit AaeB from Pectobacterium atrosepticum (strain SCRI 1043 / ATCC BAA-672) (Erwinia carotovora subsp. atroseptica).